A 271-amino-acid polypeptide reads, in one-letter code: Phosphatidylinositol transfer protein alpha isoform (271 aa).

Positions 59, 61, 86, 90, 97, and 195 each coordinate a 1,2-diacyl-sn-glycero-3-phospho-(1D-myo-inositol). Lys216 carries the post-translational modification N6-acetyllysine. Residues 251-264 show a composition bias toward basic and acidic residues; that stretch reads TKRQLDEMRQKDPV. Residues 251-271 are disordered; that stretch reads TKRQLDEMRQKDPVKGMTADD.

It belongs to the PtdIns transfer protein family. PI transfer class I subfamily. Phosphorylated by PKC in a calcium and phosphatidylserine-dependent manner. As to expression, expressed in a wide range of tissues.

Its subcellular location is the cytoplasm. It is found in the nucleus. It carries out the reaction a 1,2-diacyl-sn-glycero-3-phosphocholine(in) = a 1,2-diacyl-sn-glycero-3-phosphocholine(out). It catalyses the reaction a 1,2-diacyl-sn-glycero-3-phospho-(1D-myo-inositol)(in) = a 1,2-diacyl-sn-glycero-3-phospho-(1D-myo-inositol)(out). Its activity is regulated as follows. Phosphatidylinositol transfer activity is inhibited by N-ethylmaleimide. Its function is as follows. Catalyzes the transfer of phosphatidylinositol (PI) and phosphatidylcholine (PC) between membranes. Shows a preference for PI and PC containing shorter saturated or monosaturated acyl chains at the sn-1 and sn-2 positions. Preference order for PC is C16:1 &gt; C16:0 &gt; C18:1 &gt; C18:0 &gt; C20:4 and for PI is C16:1 &gt; C16:0 &gt; C18:1 &gt; C18:0 &gt; C20:4 &gt; C20:3. In Rattus norvegicus (Rat), this protein is Phosphatidylinositol transfer protein alpha isoform (Pitpna).